Here is an 842-residue protein sequence, read N- to C-terminus: CRM-domain containing factor CFM3, chloroplastic/mitochondrial (842 aa).

The transit peptide at 1-82 directs the protein to the chloroplast and mitochondrion; it reads MAMASSPACH…RSSGRSTMSL (82 aa). Disordered stretches follow at residues 49–80, 141–160, and 254–290; these read AALD…RSTM, RFPW…SARS, and VDYD…LPTE. The CRM 1 domain maps to 167–263; sequence LTLPAAELRR…VDYDEPEPTK (97 aa). A compositionally biased stretch (polar residues) spans 280–290; that stretch reads GSSNPSLLPTE. CRM domains are found at residues 371–468 and 582–682; these read PSLS…ELAE and ETIT…SSLR. Residues 703–732 are a coiled coil; sequence QALSRHFAKLNRKVERLKAELVQMEDVKEQ. The interval 768 to 842 is disordered; the sequence is VAGATADDDG…DRRNHDVNEY (75 aa). Residues 786–812 show a composition bias toward acidic residues; sequence DEADYPDSDDEAGDCSEDEGEDDEDEA. Basic and acidic residues predominate over residues 831–842; sequence DTDRRNHDVNEY.

In terms of assembly, interacts with RNA. Part of large ribonucleo-protein particles that contain CAF1 and/or CAF2, and RNC1.

It localises to the plastid. The protein resides in the chloroplast stroma. The protein localises to the mitochondrion. Binds specific group II introns in chloroplasts and facilitates their splicing. Acts on subgroup IIB introns. The substrates of the subgroup IIB also require the CRM domain proteins CAF1 or CAF2, with a simultaneous binding of CFM3 and CAF1 or CAF2. May influence the biogenesis of the mitochondrial small ribosomal subunit. In Zea mays (Maize), this protein is CRM-domain containing factor CFM3, chloroplastic/mitochondrial.